Here is an 89-residue protein sequence, read N- to C-terminus: Small ribosomal subunit protein uS15 (89 aa).

The protein belongs to the universal ribosomal protein uS15 family. In terms of assembly, part of the 30S ribosomal subunit. Forms a bridge to the 50S subunit in the 70S ribosome, contacting the 23S rRNA.

Its function is as follows. One of the primary rRNA binding proteins, it binds directly to 16S rRNA where it helps nucleate assembly of the platform of the 30S subunit by binding and bridging several RNA helices of the 16S rRNA. In terms of biological role, forms an intersubunit bridge (bridge B4) with the 23S rRNA of the 50S subunit in the ribosome. The sequence is that of Small ribosomal subunit protein uS15 from Herminiimonas arsenicoxydans.